We begin with the raw amino-acid sequence, 223 residues long: MKSAVVQLPGLNRDRDMIAALTKISGHQPVTIWQTETEIPDVDLIVIPGGFSYGDYLRCGAIAARMPVMQAIIDKAAKGVKVLGVCNGFQILVEAGLLPGALMRNASLKFVCREIKLKVVNAETDFTRAYAQGQVIRCPVAHHDGNYFADEATLAKIEGNGQVLFRYAEGTNPNGSINDIAGVMNEKGNVLGMMPHPENLIEAAHGGSDGRGLFASALDVVAA.

One can recognise a Glutamine amidotransferase type-1 domain in the interval 3 to 223 (SAVVQLPGLN…FASALDVVAA (221 aa)). The active-site Nucleophile is Cys86. Catalysis depends on residues His196 and Glu198.

Part of the FGAM synthase complex composed of 1 PurL, 1 PurQ and 2 PurS subunits.

The protein localises to the cytoplasm. The enzyme catalyses N(2)-formyl-N(1)-(5-phospho-beta-D-ribosyl)glycinamide + L-glutamine + ATP + H2O = 2-formamido-N(1)-(5-O-phospho-beta-D-ribosyl)acetamidine + L-glutamate + ADP + phosphate + H(+). The catalysed reaction is L-glutamine + H2O = L-glutamate + NH4(+). Its pathway is purine metabolism; IMP biosynthesis via de novo pathway; 5-amino-1-(5-phospho-D-ribosyl)imidazole from N(2)-formyl-N(1)-(5-phospho-D-ribosyl)glycinamide: step 1/2. In terms of biological role, part of the phosphoribosylformylglycinamidine synthase complex involved in the purines biosynthetic pathway. Catalyzes the ATP-dependent conversion of formylglycinamide ribonucleotide (FGAR) and glutamine to yield formylglycinamidine ribonucleotide (FGAM) and glutamate. The FGAM synthase complex is composed of three subunits. PurQ produces an ammonia molecule by converting glutamine to glutamate. PurL transfers the ammonia molecule to FGAR to form FGAM in an ATP-dependent manner. PurS interacts with PurQ and PurL and is thought to assist in the transfer of the ammonia molecule from PurQ to PurL. The sequence is that of Phosphoribosylformylglycinamidine synthase subunit PurQ from Rhizobium etli (strain ATCC 51251 / DSM 11541 / JCM 21823 / NBRC 15573 / CFN 42).